The following is a 329-amino-acid chain: Calponin-3 (329 aa).

Residue K23 is modified to N6-acetyllysine. Residues 26-130 (HQAEEDLRNW…TLVALAGLAK (105 aa)) enclose the Calponin-homology (CH) domain. An N6-methyllysine modification is found at K158. Calponin-like repeat units lie at residues 164–189 (IGLQMGTNKCASQAGMTAYGTRRHLY), 204–229 (ISLQMGTNKGASQAGMLAPGTRRDIY), and 243–268 (ISLQMGTNKVASQKGMSVYGLGRQVY). Residues 279–329 (PVIHNGSQGTGTNGSEISDSDYQAEYPDEYHGEYQDDYPRDYQYSDQGIDY) form a disordered region. Residues 306 to 318 (DEYHGEYQDDYPR) show a composition bias toward basic and acidic residues. A Phosphoserine modification is found at S323.

The protein belongs to the calponin family. Expressed in both non-smooth muscle tissues as well as smooth muscle tissues.

Functionally, thin filament-associated protein that is implicated in the regulation and modulation of smooth muscle contraction. It is capable of binding to actin, calmodulin and tropomyosin. The interaction of calponin with actin inhibits the actomyosin Mg-ATPase activity. The polypeptide is Calponin-3 (CNN3) (Homo sapiens (Human)).